A 487-amino-acid polypeptide reads, in one-letter code: uncharacterized protein (487 aa).

2 consecutive ABC transporter domains span residues 5 to 249 (VKFA…IPVK) and 265 to 487 (ISME…VIHA). 297-304 (GSNGSGKT) serves as a coordination point for ATP.

This sequence belongs to the ABC transporter superfamily.

The protein localises to the mitochondrion. This is an uncharacterized protein from Schizosaccharomyces pombe (strain 972 / ATCC 24843) (Fission yeast).